Here is a 299-residue protein sequence, read N- to C-terminus: Leucine zipper transcription factor-like protein 1 (299 aa).

Positions 96–296 (LKLQTDISEL…DLRKRLAQYE (201 aa)) form a coiled coil. Residues 145–299 (GTAELLNKEI…KRLAQYEPED (155 aa)) are interaction with BSS9.

This sequence belongs to the LZTFL1 family. In terms of assembly, self-associates. Interacts with BBS9; the interaction mediates the association of LZTL1 with the BBsome complex and regulates BBSome ciliary trafficking.

It is found in the cytoplasm. Functionally, regulates ciliary localization of the BBSome complex. Together with the BBSome complex, controls SMO ciliary trafficking and contributes to the sonic hedgehog (SHH) pathway regulation. May play a role in neurite outgrowth. May have tumor suppressor function. This Pongo abelii (Sumatran orangutan) protein is Leucine zipper transcription factor-like protein 1 (LZTFL1).